The following is a 107-amino-acid chain: Nucleoid-associated protein GOX0603 (107 aa).

Belongs to the YbaB/EbfC family. As to quaternary structure, homodimer.

The protein resides in the cytoplasm. It localises to the nucleoid. Functionally, binds to DNA and alters its conformation. May be involved in regulation of gene expression, nucleoid organization and DNA protection. In Gluconobacter oxydans (strain 621H) (Gluconobacter suboxydans), this protein is Nucleoid-associated protein GOX0603.